The primary structure comprises 643 residues: Zinc finger protein 64 (643 aa).

C2H2-type zinc fingers lie at residues 173–195 (HKCEVCGKCFSRKDKLKTHMRCH), 201–223 (YKCKTCDYAAADSSSLNKHLRIH), 229–251 (FKCQICPYASRNSSQLTVHLRSH), 297–322 (FNCRYPGCHFKTVHGMKDLDRHLRIH), 328–350 (HKCEFCDKCFSRKDNLTMHMRCH), 356–378 (HKCHLCDYAAVDSSSLKKHLRIH), 384–406 (YKCQLCPYASRNSSQLTVHLRSH), 412–434 (FQCWLCSAKFKISSDLKRHMIVH), 440–463 (FKCEFCDVRCTMKANLKSHIRIKH), 465–487 (FKCLHCAFQGRDRADLLEHSRLH), and 493–515 (EKCPECSYSCSNPAALRVHSRVH). Residues Cys495, Cys498, His511, His515, Cys523, Cys526, His539, and His544 each coordinate Zn(2+). The segment covering 538–552 (KHIDKVHREGAKTEN) has biased composition (basic and acidic residues). The tract at residues 538 to 571 (KHIDKVHREGAKTENRAPPGKDGPGESGPHHVPN) is disordered. A C2H2-type 12 zinc finger spans residues 578–600 (FGCDKCGASFVRDDSLRCHRKQH).

Belongs to the krueppel C2H2-type zinc-finger protein family. As to quaternary structure, interacts with NOTCH1. In terms of tissue distribution, widely expressed. Expressed in the brain, spleen, liver, and heart.

The protein resides in the nucleus. May be involved in the regulation of mesenchymal cell differentiation through transactivation of NOTCH1 target genes. This chain is Zinc finger protein 64, found in Mus musculus (Mouse).